We begin with the raw amino-acid sequence, 484 residues long: Chromosomal replication initiator protein DnaA (484 aa).

The domain I, interacts with DnaA modulators stretch occupies residues 1–73 (MQEGKNIWSL…EILIEKGHST (73 aa)). The tract at residues 73–140 (TINVEFIHSQ…EEIHIKYRNP (68 aa)) is domain II. A domain III, AAA+ region region spans residues 141–357 (FLKKKYTFEN…AAVTKLKAHI (217 aa)). Residues Gly-185, Gly-187, Lys-188, and Thr-189 each contribute to the ATP site. Residues 358–484 (DLEDIEIDTN…IELMNKINKN (127 aa)) are domain IV, binds dsDNA.

This sequence belongs to the DnaA family. In terms of assembly, oligomerizes as a right-handed, spiral filament on DNA at oriC.

The protein resides in the cytoplasm. In terms of biological role, plays an essential role in the initiation and regulation of chromosomal replication. ATP-DnaA binds to the origin of replication (oriC) to initiate formation of the DNA replication initiation complex once per cell cycle. Binds the DnaA box (a 9 base pair repeat at the origin) and separates the double-stranded (ds)DNA. Forms a right-handed helical filament on oriC DNA; dsDNA binds to the exterior of the filament while single-stranded (ss)DNA is stabiized in the filament's interior. The ATP-DnaA-oriC complex binds and stabilizes one strand of the AT-rich DNA unwinding element (DUE), permitting loading of DNA polymerase. After initiation quickly degrades to an ADP-DnaA complex that is not apt for DNA replication. Binds acidic phospholipids. This chain is Chromosomal replication initiator protein DnaA, found in Borrelia recurrentis (strain A1).